A 260-amino-acid chain; its full sequence is Small ribosomal subunit protein eS1 (260 aa).

Residues 1–18 (MAVGKNKRMSKGKKGGKK) show a composition bias toward basic residues. A disordered region spans residues 1-20 (MAVGKNKRMSKGKKGGKKKA).

This sequence belongs to the eukaryotic ribosomal protein eS1 family. As to quaternary structure, component of the small ribosomal subunit. Mature ribosomes consist of a small (40S) and a large (60S) subunit. The 40S subunit contains about 33 different proteins and 1 molecule of RNA (18S). The 60S subunit contains about 49 different proteins and 3 molecules of RNA (25S, 5.8S and 5S).

Its subcellular location is the cytoplasm. This is Small ribosomal subunit protein eS1 from Ostreococcus lucimarinus (strain CCE9901).